The following is a 79-amino-acid chain: Putative antitoxin VapB1 (79 aa).

Antitoxin component of a possible type II toxin-antitoxin (TA) system. The cognate toxin is VapC1. The sequence is that of Putative antitoxin VapB1 (vapB1) from Mycobacterium tuberculosis (strain ATCC 25618 / H37Rv).